Reading from the N-terminus, the 177-residue chain is Ribonuclease clavin (177 aa).

The first 27 residues, 1–27, serve as a signal peptide directing secretion; sequence MVAIKNLVLVALTAVTALAMPSPLEER. 2 cysteine pairs are disulfide-bonded: Cys-33–Cys-175 and Cys-103–Cys-159. His-77 is a catalytic residue. The interval 98-117 is disordered; the sequence is WGNSDCDRPPKHSKNGDGKN. Residues 102–117 are compositionally biased toward basic and acidic residues; that stretch reads DCDRPPKHSKNGDGKN. Glu-123 serves as the catalytic Proton acceptor. His-164 acts as the Proton donor in catalysis.

It belongs to the ribonuclease U2 family.

The protein localises to the secreted. In terms of biological role, clavin has the same substrate specificity as alpha-sarcin. It is specific for purines in both single- and double-stranded RNA. Its toxic action on eukaryotic cells is the result of cleavage of a single phosphodiester bond in the 60S subunit of ribosomes. In Aspergillus clavatus (strain ATCC 1007 / CBS 513.65 / DSM 816 / NCTC 3887 / NRRL 1 / QM 1276 / 107), this protein is Ribonuclease clavin (cla).